The sequence spans 392 residues: Nicotinate phosphoribosyltransferase (392 aa).

Histidine 214 carries the phosphohistidine; by autocatalysis modification.

This sequence belongs to the NAPRTase family. Post-translationally, transiently phosphorylated on a His residue during the reaction cycle. Phosphorylation strongly increases the affinity for substrates and increases the rate of nicotinate D-ribonucleotide production. Dephosphorylation regenerates the low-affinity form of the enzyme, leading to product release.

The catalysed reaction is nicotinate + 5-phospho-alpha-D-ribose 1-diphosphate + ATP + H2O = nicotinate beta-D-ribonucleotide + ADP + phosphate + diphosphate. It functions in the pathway cofactor biosynthesis; NAD(+) biosynthesis; nicotinate D-ribonucleotide from nicotinate: step 1/1. Its function is as follows. Catalyzes the synthesis of beta-nicotinate D-ribonucleotide from nicotinate and 5-phospho-D-ribose 1-phosphate at the expense of ATP. The polypeptide is Nicotinate phosphoribosyltransferase (Xanthomonas euvesicatoria pv. vesicatoria (strain 85-10) (Xanthomonas campestris pv. vesicatoria)).